The sequence spans 1668 residues: Zinc finger CCCH domain-containing protein 13 (1668 aa).

Disordered regions lie at residues 1–38 (MSKI…GSTA) and 56–157 (TCRF…GDIN). Positions 10–23 (VENTKTISDSTSRR) are enriched in polar residues. The C3H1-type zinc finger occupies 36 to 64 (STAETQCRNWLKTGNCLYGNTCRFVHGPS). A phosphoserine mark is found at S64 and S77. Residues 76–136 (RSPERPTGDL…IKITKERTPE (61 aa)) are compositionally biased toward basic and acidic residues. Residues K179 and K194 each participate in a glycyl lysine isopeptide (Lys-Gly) (interchain with G-Cter in SUMO2) cross-link. 2 disordered regions span residues 190 to 1112 (EIII…TATA) and 1125 to 1466 (AAAT…PISD). S198, S207, S209, and S211 each carry phosphoserine. Over residues 204-213 (SKLSPSPSLR) the composition is skewed to low complexity. Residues 214–224 (KSSKSPKRKSS) are compositionally biased toward basic residues. Residue T237 is modified to Phosphothreonine. Residues S238 and S242 each carry the phosphoserine modification. The segment covering 239-254 (AVSSPLLDQQRNSKTN) has biased composition (polar residues). T263 is subject to Phosphothreonine. S265 is subject to Phosphoserine. Positions 283-315 (KYKVKDRIEEKTRDGKDRGRDFERQREKRDKPR) are enriched in basic and acidic residues. S316, S318, S325, and S328 each carry phosphoserine. Positions 323–346 (HHSPISSRHHSSSSQSGSSIQRHS) are enriched in low complexity. Phosphothreonine occurs at positions 354 and 364. S370, S372, and S381 each carry phosphoserine. A compositionally biased stretch (low complexity) spans 370 to 382 (SASPYPSHSLSSP). Basic and acidic residues-rich tracts occupy residues 394–434 (PMRE…REER) and 442–575 (SSRD…EKGS). The span at 584-593 (DSHSSNSNYH) shows a compositional bias: low complexity. The span at 594–640 (DSWETRSSYPERDRYPERDNRDQARDSSFERRHGERDRRDNRERDQR) shows a compositional bias: basic and acidic residues. At S643 the chain carries Phosphoserine. A coiled-coil region spans residues 645–789 (IRHQGRNDEL…RDKERERQRD (145 aa)). Residues 649–821 (GRNDELERDE…NPRDGHDERK (173 aa)) are compositionally biased toward basic and acidic residues. Phosphoserine occurs at positions 831, 833, 837, 845, 848, 853, 873, 875, and 877. A compositionally biased stretch (basic and acidic residues) spans 881-957 (LTEDRQGRWK…TSDRAHDENK (77 aa)). A Phosphothreonine modification is found at T882. Residue S943 is modified to Phosphoserine. The span at 958–969 (KKAKIQKKPIKK) shows a compositional bias: basic residues. Residues 970 to 981 (KKEDDVGIERGN) show a composition bias toward basic and acidic residues. A phosphoserine mark is found at S986, S993, S1010, S1014, and S1017. The span at 996 to 1010 (KGQKKKSIEKKRKKS) shows a compositional bias: basic residues. At T1033 the chain carries Phosphothreonine. Residues 1073–1083 (PDRTEVTEAEH) are compositionally biased toward basic and acidic residues. Composition is skewed to low complexity over residues 1084–1100 (TATA…LSSL) and 1125–1153 (AAAT…TFAN). Basic and acidic residues predominate over residues 1163-1188 (TRVEKVETPHVTIEDAQHRKPMDQKR). T1170 is modified (phosphothreonine). 4 positions are modified to phosphoserine: S1191, S1194, S1208, and S1210. The span at 1213–1223 (SAHRSGDDQSG) shows a compositional bias: basic and acidic residues. Position 1230 is a phosphoserine (S1230). Composition is skewed to basic and acidic residues over residues 1231–1286 (GSRD…DRQV) and 1294–1379 (DSRD…DRTF). The stretch at 1300 to 1366 (QERDRYEHDR…RERERLISDS (67 aa)) forms a coiled coil. A phosphoserine mark is found at S1364, S1366, S1382, S1386, S1406, S1409, S1438, L1453, G1456, S1465, and D1466. Basic and acidic residues-rich tracts occupy residues 1386–1421 (SVKR…DKDL) and 1429–1438 (ETNKSERTES).

The protein belongs to the ZC3H13 family. As to quaternary structure, component of the WMM complex, a N6-methyltransferase complex composed of a catalytic subcomplex, named MAC, and of an associated subcomplex, named MACOM. The MAC subcomplex is composed of METTL3 and METTL14. The MACOM subcomplex is composed of WTAP, ZC3H13, CBLL1/HAKAI, VIRMA, and, in some cases of RBM15 (RBM15 or RBM15B). Also a component of a MACOM-like complex, named WTAP complex, composed of WTAP, ZC3H13, CBLL1/HAKAI, VIRMA, RBM15, BCLAF1 and THRAP3.

The protein localises to the nucleus speckle. The protein resides in the nucleus. Its subcellular location is the nucleoplasm. Its function is as follows. Associated component of the WMM complex, a complex that mediates N6-methyladenosine (m6A) methylation of RNAs, a modification that plays a role in the efficiency of mRNA splicing and RNA processing. Acts as a key regulator of m6A methylation by promoting m6A methylation of mRNAs at the 3'-UTR. Controls embryonic stem cells (ESCs) pluripotency via its role in m6A methylation. In the WMM complex, anchors component of the MACOM subcomplex in the nucleus. Also required for bridging WTAP to the RNA-binding component RBM15 (RBM15 or RBM15B). The chain is Zinc finger CCCH domain-containing protein 13 from Homo sapiens (Human).